We begin with the raw amino-acid sequence, 88 residues long: Transcription factor ILI5 (88 aa).

In terms of domain architecture, bHLH spans 1 to 54 (MSSRRSSRGSISEEEINELISKLQSLLPNSRRRGSSQASTTKLLKETCNYIKSL).

This sequence belongs to the bHLH protein family. In terms of assembly, interacts with APG.

Its subcellular location is the nucleus. Functionally, atypical and probable non DNA-binding bHLH transcription factor that acts as a positive regulator of grain size. Binds the transcription repressor APG and forms a heterodimer of antagonistic basic helix-loop-helix transcription factors that regulates grain length and weight by controlling cell elongation in lemma and palea. This chain is Transcription factor ILI5 (ILI5), found in Oryza sativa subsp. indica (Rice).